Consider the following 833-residue polypeptide: MutS protein homolog 5 (833 aa).

The interval 1–45 (MAFRATPGRTPPGPGPRSGIPSASFPSPQPPMAGPGGIEEEDEEE) is disordered. An ATP-binding site is contributed by 591 to 598 (GPNSSGKS).

It belongs to the DNA mismatch repair MutS family. As to quaternary structure, heterooligomer of MSH4 and MSH5. Interacts with HJURP. Interacts with REDIC1.

In terms of biological role, involved in DNA mismatch repair and meiotic recombination processes. Facilitates crossovers between homologs during meiosis. In Mus musculus (Mouse), this protein is MutS protein homolog 5 (Msh5).